The chain runs to 89 residues: Protein PerC (89 aa).

In terms of biological role, transcriptional activator of eaeA/bfpA expression in enteropathogenic E.coli. This Escherichia coli O111:H- protein is Protein PerC (perC).